The primary structure comprises 394 residues: MIRKERAILALEDGTVYRGYAFGHRGETVGEVVFNTSMTGYQEIMTDPSYNGQIVTITYPHVGNYGVAIYDMESNKPYVRGFIAREFSGEYSNHRAQQSLEAFMQQYGVVSIQGIDTRALVRRLRTGGVVKGVIAHRSYTHPEDPYGEFTPAEEQIYVQRARDHQDIDGHDMTKEVTTPLPYAFPTLRHGKRVVLMDFGIKHTIIERLAEVGIEPIVVPAHTTPAQIMALQPHGLFLSNGPGDPAPLEYAHKTAWELMGLLPTFGICLGHQILGLAAGGQTFKMKFGHRGGNQPVKNLLTGNVEITSQNHGYAVDIASIPDGAFVATHVNLNDGTLEGMAHSRYPVFSVQYHPEASPGPHDSRYLFDRFIEEIDAFEGANGSPVLKASAGRLGV.

The interval 1–188 (MIRKERAILA…PLPYAFPTLR (188 aa)) is CPSase. Serine 49, glycine 240, and glycine 242 together coordinate L-glutamine. Residues 192-379 (RVVLMDFGIK…IEEIDAFEGA (188 aa)) form the Glutamine amidotransferase type-1 domain. The active-site Nucleophile is the cysteine 267. Leucine 268, glutamine 271, asparagine 309, glycine 311, and tyrosine 312 together coordinate L-glutamine. Active-site residues include histidine 352 and glutamate 354.

Belongs to the CarA family. As to quaternary structure, composed of two chains; the small (or glutamine) chain promotes the hydrolysis of glutamine to ammonia, which is used by the large (or ammonia) chain to synthesize carbamoyl phosphate. Tetramer of heterodimers (alpha,beta)4.

It carries out the reaction hydrogencarbonate + L-glutamine + 2 ATP + H2O = carbamoyl phosphate + L-glutamate + 2 ADP + phosphate + 2 H(+). It catalyses the reaction L-glutamine + H2O = L-glutamate + NH4(+). It functions in the pathway amino-acid biosynthesis; L-arginine biosynthesis; carbamoyl phosphate from bicarbonate: step 1/1. Its pathway is pyrimidine metabolism; UMP biosynthesis via de novo pathway; (S)-dihydroorotate from bicarbonate: step 1/3. Small subunit of the glutamine-dependent carbamoyl phosphate synthetase (CPSase). CPSase catalyzes the formation of carbamoyl phosphate from the ammonia moiety of glutamine, carbonate, and phosphate donated by ATP, constituting the first step of 2 biosynthetic pathways, one leading to arginine and/or urea and the other to pyrimidine nucleotides. The small subunit (glutamine amidotransferase) binds and cleaves glutamine to supply the large subunit with the substrate ammonia. The chain is Carbamoyl phosphate synthase small chain from Deinococcus geothermalis (strain DSM 11300 / CIP 105573 / AG-3a).